Here is a 221-residue protein sequence, read N- to C-terminus: Small ribosomal subunit protein uS4c (221 aa).

A disordered region spans residues 26-53 (RKRTDNRCMPGQHRKKRNDSTKKTKNSK). Over residues 37–53 (QHRKKRNDSTKKTKNSK) the composition is skewed to basic residues. Residues 103–161 (MRLDNIVFRLGMAPTIPAARQLVNHGHIVVNNKKVDISSYQCQSQDVISVTKNKTIRTL) enclose the S4 RNA-binding domain.

This sequence belongs to the universal ribosomal protein uS4 family. Part of the 30S ribosomal subunit. Contacts protein S5. The interaction surface between S4 and S5 is involved in control of translational fidelity.

The protein resides in the plastid. The protein localises to the chloroplast. One of the primary rRNA binding proteins, it binds directly to 16S rRNA where it nucleates assembly of the body of the 30S subunit. Its function is as follows. With S5 and S12 plays an important role in translational accuracy. The polypeptide is Small ribosomal subunit protein uS4c (rps4) (Pleurastrum terricola (Filamentous green alga)).